Reading from the N-terminus, the 594-residue chain is (-)-endo-fenchol synthase, chloroplastic (594 aa).

The N-terminal 50 residues, 1–50 (MSSLVMHVGIVNKPAITYLPTLSRRASNLHNVSSTRLQTSCSLQLDYKPV), are a transit peptide targeting the chloroplast. Mg(2+) contacts are provided by Asp-348, Asp-352, Asp-492, and Glu-500. Residues 348 to 352 (DDIYD) carry the DDXXD motif motif.

Belongs to the terpene synthase family. Tpsa subfamily. The cofactor is Mg(2+). Mn(2+) serves as cofactor. As to expression, expressed at low levels in leaves.

It localises to the plastid. The protein resides in the chloroplast. The catalysed reaction is (2E)-geranyl diphosphate = alpha-pinene + diphosphate. The enzyme catalyses (2E)-geranyl diphosphate + H2O = (1S,2S,4R)-endo-fenchol + diphosphate. It carries out the reaction (2E)-geranyl diphosphate = limonene + diphosphate. The protein operates within secondary metabolite biosynthesis; terpenoid biosynthesis. Monoterpene synthase involved in the biosynthesis of volatile compounds widely used in aromatherapy and folk medicine, and present in culinary herbs. Mediates the conversion of (2E)-geranyl diphosphate (GPP) into alpha fenchol, limonene and alpha-pinene and, as minor compounds, into beta-myrcene, alpha-terpinolene and alpha-phellandrene. This is (-)-endo-fenchol synthase, chloroplastic from Lavandula stoechas (Butterfly lavender).